The following is a 459-amino-acid chain: Glycosyl hydrolase family 109 protein 1 (459 aa).

Positions 1 to 31 form a signal peptide, tat-type signal; it reads MHNIHRRHFLKAAGAVTAGLVTANIALNANA. NAD(+) contacts are provided by residues 64–65, Asp86, 135–138, 155–156, and Asn184; these read ER, WEWH, and EV. Substrate is bound by residues Tyr213, Arg232, 244-247, and Tyr326; that span reads YPTH. Tyr244 is an NAD(+) binding site.

The protein belongs to the Gfo/Idh/MocA family. Glycosyl hydrolase 109 subfamily. NAD(+) serves as cofactor. Predicted to be exported by the Tat system. The position of the signal peptide cleavage has not been experimentally proven.

Functionally, glycosidase. In Shewanella sp. (strain ANA-3), this protein is Glycosyl hydrolase family 109 protein 1.